An 872-amino-acid polypeptide reads, in one-letter code: Cellulose synthase catalytic subunit [UDP-forming] (872 aa).

4 consecutive transmembrane segments (helical) span residues 30–50 (SAFS…FIPL), 151–171 (ILGI…TQPF), 173–193 (PLAQ…VRRM), and 230–250 (LVCG…LVLG). The interval 271–364 (LWPSVDIFVP…FVSIFDCDHV (94 aa)) is catalytic subdomain A. Residue aspartate 313 is part of the active site. 2 residues coordinate substrate: aspartate 360 and aspartate 362. The segment at 441–501 (KPLDEIGGIA…GQRIRWARGM (61 aa)) is catalytic subdomain B. Residue aspartate 457 is part of the active site. Transmembrane regions (helical) follow at residues 525–545 (VNAM…TAPL), 547–567 (FLLL…LFVL), 592–612 (IYET…LINP), 640–660 (IFLV…YFYG), and 668–688 (VVVS…AVAV). Positions 694-790 (QVRRSHRVEM…QHIDFVQCTF (97 aa)) constitute a PilZ domain. The helical transmembrane segment at 833-853 (SVKGIFRVLTSLVSWVVSFIP) threads the bilayer.

This sequence belongs to the glycosyltransferase 2 family. Requires Mg(2+) as cofactor.

The protein localises to the cell inner membrane. It catalyses the reaction [(1-&gt;4)-beta-D-glucosyl](n) + UDP-alpha-D-glucose = [(1-&gt;4)-beta-D-glucosyl](n+1) + UDP + H(+). It functions in the pathway glycan metabolism; bacterial cellulose biosynthesis. With respect to regulation, activated by bis-(3'-5') cyclic diguanylic acid (c-di-GMP). Its function is as follows. Catalytic subunit of cellulose synthase. It polymerizes uridine 5'-diphosphate glucose to cellulose, which is produced as an extracellular component for mechanical and chemical protection at the onset of the stationary phase, when the cells exhibit multicellular behavior (rdar morphotype). Coexpression of cellulose and thin aggregative fimbriae (curli fimbrae or fibers) leads to a hydrophobic network with tightly packed cells embedded in a highly inert matrix that confers cohesion, elasticity and tissue-like properties to colonies. The chain is Cellulose synthase catalytic subunit [UDP-forming] (bcsA) from Escherichia coli (strain K12).